A 130-amino-acid polypeptide reads, in one-letter code: Protachykinin-1 (130 aa).

The signal sequence occupies residues 1-19 (MKILVAVAVIFFISTQLSA). Residues 20–56 (EEIGANDDFNYWSDWSDSDQIKEEMPEPFEHLLQRIA) constitute a propeptide that is removed on maturation. Residues Met68 and Met107 each carry the methionine amide modification.

It belongs to the tachykinin family. In terms of processing, the substance P form is cleaved at Pro-59 by the prolyl endopeptidase FAP (seprase) activity (in vitro). Substance P is also cleaved and degraded by Angiotensin-converting enzyme (ACE) and neprilysin (MME).

It is found in the secreted. Tachykinins are active peptides which excite neurons, evoke behavioral responses, are potent vasodilators and secretagogues, and contract (directly or indirectly) many smooth muscles. The protein is Protachykinin-1 (TAC1) of Bos taurus (Bovine).